Reading from the N-terminus, the 185-residue chain is Transcription factor E (185 aa).

The region spanning 5-88 (KNKELLEIAQ…YWRLETKKLP (84 aa)) is the HTH TFE/IIEalpha-type domain.

It belongs to the TFE family. In terms of assembly, monomer. Interaction with RNA polymerase subunits RpoF and RpoE is necessary for Tfe stimulatory transcription activity. Able to interact with Tbp and RNA polymerase in the absence of DNA promoter. Interacts both with the preinitiation and elongation complexes.

Its function is as follows. Transcription factor that plays a role in the activation of archaeal genes transcribed by RNA polymerase. Facilitates transcription initiation by enhancing TATA-box recognition by TATA-box-binding protein (Tbp), and transcription factor B (Tfb) and RNA polymerase recruitment. Not absolutely required for transcription in vitro, but particularly important in cases where Tbp or Tfb function is not optimal. It dynamically alters the nucleic acid-binding properties of RNA polymerases by stabilizing the initiation complex and destabilizing elongation complexes. Seems to translocate with the RNA polymerase following initiation and acts by binding to the non template strand of the transcription bubble in elongation complexes. This is Transcription factor E from Thermococcus kodakarensis (strain ATCC BAA-918 / JCM 12380 / KOD1) (Pyrococcus kodakaraensis (strain KOD1)).